The sequence spans 251 residues: ATP synthase subunit a (251 aa).

The next 6 helical transmembrane spans lie at 30-50, 86-106, 116-136, 145-165, 195-215, and 219-239; these read NSNE…VVAL, FFPF…LGLF, IAIT…VGFW, FFSP…IEIV, FMLM…IIPL, and IALT…FAIL.

This sequence belongs to the ATPase A chain family. F-type ATPases have 2 components, CF(1) - the catalytic core - and CF(0) - the membrane proton channel. CF(1) has five subunits: alpha(3), beta(3), gamma(1), delta(1), epsilon(1). CF(0) has three main subunits: a(1), b(2) and c(9-12). The alpha and beta chains form an alternating ring which encloses part of the gamma chain. CF(1) is attached to CF(0) by a central stalk formed by the gamma and epsilon chains, while a peripheral stalk is formed by the delta and b chains.

The protein localises to the cell inner membrane. Key component of the proton channel; it plays a direct role in the translocation of protons across the membrane. This Acidiphilium cryptum (strain JF-5) protein is ATP synthase subunit a.